Reading from the N-terminus, the 430-residue chain is Adenylosuccinate synthetase (430 aa).

GTP is bound by residues 12–18 (GDEGKGK) and 40–42 (GHT). Residue aspartate 13 is the Proton acceptor of the active site. Residues aspartate 13 and glycine 40 each coordinate Mg(2+). IMP-binding positions include 13–16 (DEGK), 38–41 (NAGH), threonine 128, arginine 142, glutamine 223, threonine 238, and arginine 302. Catalysis depends on histidine 41, which acts as the Proton donor. GTP is bound by residues 330 to 332 (SID) and 412 to 414 (SVG).

The protein belongs to the adenylosuccinate synthetase family. As to quaternary structure, homodimer. Mg(2+) is required as a cofactor.

The protein resides in the cytoplasm. It catalyses the reaction IMP + L-aspartate + GTP = N(6)-(1,2-dicarboxyethyl)-AMP + GDP + phosphate + 2 H(+). The protein operates within purine metabolism; AMP biosynthesis via de novo pathway; AMP from IMP: step 1/2. Functionally, plays an important role in the de novo pathway of purine nucleotide biosynthesis. Catalyzes the first committed step in the biosynthesis of AMP from IMP. This is Adenylosuccinate synthetase from Bacillus subtilis (strain 168).